The following is a 541-amino-acid chain: Chaperonin GroEL (541 aa).

ATP-binding positions include 29 to 32 (TIGP), 86 to 90 (DGTTT), Gly-413, and Asp-494.

This sequence belongs to the chaperonin (HSP60) family. As to quaternary structure, forms a cylinder of 14 subunits composed of two heptameric rings stacked back-to-back. Interacts with the co-chaperonin GroES.

It is found in the cytoplasm. The catalysed reaction is ATP + H2O + a folded polypeptide = ADP + phosphate + an unfolded polypeptide.. Its function is as follows. Together with its co-chaperonin GroES, plays an essential role in assisting protein folding. The GroEL-GroES system forms a nano-cage that allows encapsulation of the non-native substrate proteins and provides a physical environment optimized to promote and accelerate protein folding. In Lachnospira eligens (strain ATCC 27750 / DSM 3376 / VPI C15-48 / C15-B4) (Eubacterium eligens), this protein is Chaperonin GroEL.